The following is a 193-amino-acid chain: Peptidyl-tRNA hydrolase (193 aa).

Tyr16 serves as a coordination point for tRNA. His21 (proton acceptor) is an active-site residue. 3 residues coordinate tRNA: Phe67, Asn69, and Asn115.

This sequence belongs to the PTH family. As to quaternary structure, monomer.

It localises to the cytoplasm. It carries out the reaction an N-acyl-L-alpha-aminoacyl-tRNA + H2O = an N-acyl-L-amino acid + a tRNA + H(+). Its function is as follows. Hydrolyzes ribosome-free peptidyl-tRNAs (with 1 or more amino acids incorporated), which drop off the ribosome during protein synthesis, or as a result of ribosome stalling. Functionally, catalyzes the release of premature peptidyl moieties from peptidyl-tRNA molecules trapped in stalled 50S ribosomal subunits, and thus maintains levels of free tRNAs and 50S ribosomes. The polypeptide is Peptidyl-tRNA hydrolase (Psychrobacter arcticus (strain DSM 17307 / VKM B-2377 / 273-4)).